The sequence spans 94 residues: MIRDVLVGIVKGYRLLLSPWLGSSCRFEPTCSAYSLQALQTHGAAAGSYLTLTRLARCHPWCAGGSDPVPSEKPRFKSQLFTQLIHPSSEKKSS.

The protein belongs to the UPF0161 family.

It is found in the cell inner membrane. Could be involved in insertion of integral membrane proteins into the membrane. This is Putative membrane protein insertion efficiency factor from Albidiferax ferrireducens (strain ATCC BAA-621 / DSM 15236 / T118) (Rhodoferax ferrireducens).